A 184-amino-acid polypeptide reads, in one-letter code: TRAF-interacting protein with FHA domain-containing protein A (184 aa).

Thr9 carries the post-translational modification Phosphothreonine. One can recognise an FHA domain in the interval 47–103 (VKFGRNSNMCQYTFQDKQVSRIQFVLQPFKQFNSSVLSFEIKNMSKKTSLMVDNQEL). The tract at residues 152–184 (NNWPTQNPIPEDGMYSSYFTHRSSPSEMDENEL) is disordered. The span at 168–177 (SYFTHRSSPS) shows a compositional bias: polar residues.

This sequence belongs to the TIFA family. Homooligomer; homooligomerizes following phosphorylation at Thr-9. Interacts with IRAK1, TRAF2 and TRAF6. Interacts with TIFAB; binding to TIFAB inhibits TRAF6 activation, possibly by inducing a conformational change in TIFA. Interacts with ZCCHC11; binding to ZCCHC11 suppresses the TRAF6-dependent activation of NF-kappa-B. Post-translationally, phosphorylated at Thr-9 following detection of ADP-D-glycero-beta-D-manno-heptose (ADP-Heptose) by ALPK1. Phosphorylation at Thr-9 by ALPK1 leads to the formation of an intermolecular binding between the FHA domain and phosphorylated Thr-9, promoting TIFA oligomerization and TIFA-mediated NF-kappa-B activation. In terms of tissue distribution, highly expressed in the spleen and at lower levels in heart, brain, lung, liver, kidney and testes.

It localises to the cytoplasm. Adapter molecule that plays a key role in the activation of pro-inflammatory NF-kappa-B signaling following detection of bacterial pathogen-associated molecular pattern metabolites (PAMPs). Promotes activation of an innate immune response by inducing the oligomerization and polyubiquitination of TRAF6, which leads to the activation of TAK1 and IKK through a proteasome-independent mechanism. TIFA-dependent innate immune response is triggered by ADP-D-glycero-beta-D-manno-heptose (ADP-Heptose), a potent PAMP present in all Gram-negative and some Gram-positive bacteria: ADP-Heptose is recognized by ALPK1, which phosphorylates TIFA at Thr-9, leading to TIFA homooligomerization and subsequent activation of pro-inflammatory NF-kappa-B signaling. In Mus musculus (Mouse), this protein is TRAF-interacting protein with FHA domain-containing protein A.